Here is a 362-residue protein sequence, read N- to C-terminus: Cobalt-precorrin-5B C(1)-methyltransferase (362 aa).

The protein belongs to the CbiD family.

It catalyses the reaction Co-precorrin-5B + S-adenosyl-L-methionine = Co-precorrin-6A + S-adenosyl-L-homocysteine. It functions in the pathway cofactor biosynthesis; adenosylcobalamin biosynthesis; cob(II)yrinate a,c-diamide from sirohydrochlorin (anaerobic route): step 6/10. Catalyzes the methylation of C-1 in cobalt-precorrin-5B to form cobalt-precorrin-6A. The polypeptide is Cobalt-precorrin-5B C(1)-methyltransferase (Burkholderia thailandensis (strain ATCC 700388 / DSM 13276 / CCUG 48851 / CIP 106301 / E264)).